Consider the following 374-residue polypeptide: Pectate lyase 2 (374 aa).

The first 22 residues, 1 to 22 (MKYLLPTAATGLLLLAAQPAVA), serve as a signal peptide directing secretion. A disulfide bridge connects residues Cys93 and Cys176. Residues Asp150, Asp152, Glu187, and Asp191 each coordinate Ca(2+). Residue Arg239 is part of the active site. Cys350 and Cys373 are joined by a disulfide.

It belongs to the polysaccharide lyase 1 family. PLADES subfamily. It depends on Ca(2+) as a cofactor.

Its subcellular location is the secreted. It carries out the reaction Eliminative cleavage of (1-&gt;4)-alpha-D-galacturonan to give oligosaccharides with 4-deoxy-alpha-D-galact-4-enuronosyl groups at their non-reducing ends.. It participates in glycan metabolism; pectin degradation; 2-dehydro-3-deoxy-D-gluconate from pectin: step 2/5. In terms of biological role, involved in maceration and soft-rotting of plant tissue. The sequence is that of Pectate lyase 2 (pel2) from Pectobacterium atrosepticum (strain SCRI 1043 / ATCC BAA-672) (Erwinia carotovora subsp. atroseptica).